The sequence spans 358 residues: Alanine racemase, biosynthetic (358 aa).

Catalysis depends on lysine 34, which acts as the Proton acceptor; specific for D-alanine. Residue lysine 34 is modified to N6-(pyridoxal phosphate)lysine. Arginine 130 contacts substrate. Residue tyrosine 254 is the Proton acceptor; specific for L-alanine of the active site. Methionine 302 provides a ligand contact to substrate.

Belongs to the alanine racemase family. It depends on pyridoxal 5'-phosphate as a cofactor.

The catalysed reaction is L-alanine = D-alanine. The protein operates within amino-acid biosynthesis; D-alanine biosynthesis; D-alanine from L-alanine: step 1/1. It participates in cell wall biogenesis; peptidoglycan biosynthesis. In terms of biological role, catalyzes the interconversion of L-alanine and D-alanine. Provides the D-alanine required for cell wall biosynthesis. The protein is Alanine racemase, biosynthetic (alr) of Pseudomonas aeruginosa (strain ATCC 15692 / DSM 22644 / CIP 104116 / JCM 14847 / LMG 12228 / 1C / PRS 101 / PAO1).